The following is a 225-amino-acid chain: ATP-dependent dethiobiotin synthetase BioD (225 aa).

ATP is bound at residue 13 to 18 (NVGKTL). Threonine 17 provides a ligand contact to Mg(2+). Lysine 38 is a catalytic residue. Threonine 42 contributes to the substrate binding site. ATP is bound by residues aspartate 55, 116–119 (EGAG), 176–177 (NH), and 205–207 (PWL). Mg(2+) contacts are provided by aspartate 55 and glutamate 116.

Belongs to the dethiobiotin synthetase family. As to quaternary structure, homodimer. Mg(2+) is required as a cofactor.

It localises to the cytoplasm. The catalysed reaction is (7R,8S)-7,8-diammoniononanoate + CO2 + ATP = (4R,5S)-dethiobiotin + ADP + phosphate + 3 H(+). It participates in cofactor biosynthesis; biotin biosynthesis; biotin from 7,8-diaminononanoate: step 1/2. In terms of biological role, catalyzes a mechanistically unusual reaction, the ATP-dependent insertion of CO2 between the N7 and N8 nitrogen atoms of 7,8-diaminopelargonic acid (DAPA, also called 7,8-diammoniononanoate) to form a ureido ring. The sequence is that of ATP-dependent dethiobiotin synthetase BioD from Baumannia cicadellinicola subsp. Homalodisca coagulata.